A 786-amino-acid polypeptide reads, in one-letter code: Ciliated left-right organizer ZP-N domains-containing protein (786 aa).

Residues 1-18 (MWGSVAVVWAICLACIQP) form the signal peptide.

As to expression, expressed specifically by cells of the ciliated left-right organizer.

Functionally, plays a role in left-right patterning process. This chain is Ciliated left-right organizer ZP-N domains-containing protein (Ciroz), found in Mus musculus (Mouse).